Reading from the N-terminus, the 210-residue chain is Protein GET1 (210 aa).

Over 1–4 (MASL) the chain is Lumenal. A helical transmembrane segment spans residues 5–24 (LIIVFLSHVVTYLINTIGAT). Topologically, residues 25–110 (TVDNLLWLLY…SFDLTVKSVR (86 aa)) are cytoplasmic. Residues 43 to 97 (RTAVEQRRLKGEVVQLKREMKSTSSQDEFAKWAKLRRRHDKAMEEYEAKNKALGK) adopt a coiled-coil conformation. The chain crosses the membrane as a helical span at residues 111-131 (FFSTTGLKFFLQFWYSKTPMF). Over 132–155 (ELPRGWVPWQVEWVLSFPRAPLGT) the chain is Lumenal. The chain crosses the membrane as a helical span at residues 156-172 (VSIQVWSGVCTTVVSLA). Residues 173–210 (GDALGVVIQSLILKMTKRGVARTSEGRPSQPMALKKEL) are Cytoplasmic-facing.

This sequence belongs to the WRB/GET1 family. Interacts with GET3.

It is found in the endoplasmic reticulum membrane. Required for the post-translational delivery of tail-anchored (TA) proteins to the endoplasmic reticulum. Acts as a membrane receptor for soluble GET3, which recognizes and selectively binds the transmembrane domain of TA proteins in the cytosol. The protein is Protein GET1 of Uncinocarpus reesii (strain UAMH 1704).